Here is a 141-residue protein sequence, read N- to C-terminus: Hemoglobin subunit alpha (141 aa).

Residues 1 to 141 enclose the Globin domain; it reads VLSPADKSNV…VSTVLTSKYR (141 aa). At S3 the chain carries Phosphoserine. Residues K7 and K11 each carry the N6-succinyllysine modification. K16 carries the N6-acetyllysine; alternate modification. Position 16 is an N6-succinyllysine; alternate (K16). Y24 carries the phosphotyrosine modification. Phosphoserine is present on S35. The residue at position 40 (K40) is an N6-succinyllysine. A Phosphoserine modification is found at S49. H58 is a binding site for O2. H87 provides a ligand contact to heme b. Phosphoserine is present on S102. T108 is modified (phosphothreonine). 2 positions are modified to phosphoserine: S124 and S131. A phosphothreonine mark is found at T134 and T137. The residue at position 138 (S138) is a Phosphoserine.

It belongs to the globin family. Heterotetramer of two alpha chains and two beta chains. In terms of tissue distribution, red blood cells.

Functionally, involved in oxygen transport from the lung to the various peripheral tissues. In terms of biological role, hemopressin acts as an antagonist peptide of the cannabinoid receptor CNR1. Hemopressin-binding efficiently blocks cannabinoid receptor CNR1 and subsequent signaling. The chain is Hemoglobin subunit alpha (HBA) from Leontocebus fuscicollis (Brown-mantled tamarin).